The chain runs to 258 residues: Acetylglutamate kinase (258 aa).

Residues Gly-44 to Gly-45, Arg-66, and Asn-158 contribute to the substrate site. ATP is bound by residues Asp-181–Leu-186 and Ile-209–Thr-211.

The protein belongs to the acetylglutamate kinase family. ArgB subfamily. As to quaternary structure, homodimer.

The protein resides in the cytoplasm. The enzyme catalyses N-acetyl-L-glutamate + ATP = N-acetyl-L-glutamyl 5-phosphate + ADP. It functions in the pathway amino-acid biosynthesis; L-arginine biosynthesis; N(2)-acetyl-L-ornithine from L-glutamate: step 2/4. Its function is as follows. Catalyzes the ATP-dependent phosphorylation of N-acetyl-L-glutamate. This Shigella flexneri serotype 5b (strain 8401) protein is Acetylglutamate kinase.